We begin with the raw amino-acid sequence, 696 residues long: DNA-directed RNA polymerase subunit beta' (696 aa).

Residues cysteine 76, cysteine 78, cysteine 94, and cysteine 97 each coordinate Zn(2+). 3 residues coordinate Mg(2+): aspartate 496, aspartate 498, and aspartate 500.

This sequence belongs to the RNA polymerase beta' chain family. RpoC1 subfamily. In plastids the minimal PEP RNA polymerase catalytic core is composed of four subunits: alpha, beta, beta', and beta''. When a (nuclear-encoded) sigma factor is associated with the core the holoenzyme is formed, which can initiate transcription. Requires Mg(2+) as cofactor. Zn(2+) serves as cofactor.

The protein resides in the plastid. It is found in the chloroplast. It catalyses the reaction RNA(n) + a ribonucleoside 5'-triphosphate = RNA(n+1) + diphosphate. In terms of biological role, DNA-dependent RNA polymerase catalyzes the transcription of DNA into RNA using the four ribonucleoside triphosphates as substrates. The polypeptide is DNA-directed RNA polymerase subunit beta' (Guizotia abyssinica (Niger)).